Consider the following 314-residue polypeptide: Solute carrier family 25 member 33 (314 aa).

Solcar repeat units follow at residues 4 to 111 (KDTL…SKET), 119 to 206 (NSGV…LKKY), and 224 to 308 (SDFL…IVHL). A run of 6 helical transmembrane segments spans residues 7–27 (LLHL…TCPL), 44–58 (VFQV…AGVI), 114–134 (GIFV…AAFI), 183–203 (LTAS…YETL), 226–246 (FLGL…IAYP), and 291–311 (QIPN…LLAE).

This sequence belongs to the mitochondrial carrier (TC 2.A.29) family.

The protein resides in the mitochondrion inner membrane. Mitochondrial transporter that imports/exports pyrimidine nucleotides into and from mitochondria which participates in dendritic cell endocytosis. In Danio rerio (Zebrafish), this protein is Solute carrier family 25 member 33 (slc25a33).